The chain runs to 253 residues: Sulfate transporter CysZ (253 aa).

Transmembrane regions (helical) follow at residues 27-47 (FVLL…YLAV), 71-91 (ILWP…FTVV), 150-170 (LFIL…WLLF), and 211-231 (IVYV…AAVA).

Belongs to the CysZ family.

It localises to the cell inner membrane. High affinity, high specificity proton-dependent sulfate transporter, which mediates sulfate uptake. Provides the sulfur source for the cysteine synthesis pathway. In Pseudomonas syringae pv. tomato (strain ATCC BAA-871 / DC3000), this protein is Sulfate transporter CysZ.